We begin with the raw amino-acid sequence, 510 residues long: 2,3-bisphosphoglycerate-independent phosphoglycerate mutase (510 aa).

Residues aspartate 14 and serine 64 each contribute to the Mn(2+) site. Serine 64 functions as the Phosphoserine intermediate in the catalytic mechanism. Residues histidine 125, 155 to 156 (RD), arginine 187, arginine 193, 259 to 262 (RADR), and lysine 332 contribute to the substrate site. Mn(2+)-binding residues include aspartate 399, histidine 403, aspartate 440, histidine 441, and histidine 459.

It belongs to the BPG-independent phosphoglycerate mutase family. As to quaternary structure, monomer. It depends on Mn(2+) as a cofactor.

It carries out the reaction (2R)-2-phosphoglycerate = (2R)-3-phosphoglycerate. Its pathway is carbohydrate degradation; glycolysis; pyruvate from D-glyceraldehyde 3-phosphate: step 3/5. In terms of biological role, catalyzes the interconversion of 2-phosphoglycerate and 3-phosphoglycerate. Essential for the growth and pathogenicity on the host plant. The polypeptide is 2,3-bisphosphoglycerate-independent phosphoglycerate mutase (Pseudomonas syringae pv. tomato (strain ATCC BAA-871 / DC3000)).